Reading from the N-terminus, the 119-residue chain is Ribonuclease P protein component (119 aa).

This sequence belongs to the RnpA family. In terms of assembly, consists of a catalytic RNA component (M1 or rnpB) and a protein subunit.

The catalysed reaction is Endonucleolytic cleavage of RNA, removing 5'-extranucleotides from tRNA precursor.. Functionally, RNaseP catalyzes the removal of the 5'-leader sequence from pre-tRNA to produce the mature 5'-terminus. It can also cleave other RNA substrates such as 4.5S RNA. The protein component plays an auxiliary but essential role in vivo by binding to the 5'-leader sequence and broadening the substrate specificity of the ribozyme. This chain is Ribonuclease P protein component, found in Citrobacter koseri (strain ATCC BAA-895 / CDC 4225-83 / SGSC4696).